The following is a 140-amino-acid chain: Pro-variola growth factor (140 aa).

The N-terminal stretch at 1-18 (MSMKYLMLLFAAMIIRSF) is a signal peptide. Residues 19–100 (ANSGNAIETT…SEKPNTTTSY (82 aa)) lie on the Extracellular side of the membrane. Residue Asn-34 is glycosylated (N-linked (GlcNAc...) asparagine; by host). The 41-residue stretch at 41 to 81 (AIRLCGPEGNGYCFHGICIHARDIDGMYCRCSHGYTGIRCQ) folds into the EGF-like domain. 3 disulfide bridges follow: Cys-45/Cys-58, Cys-53/Cys-69, and Cys-71/Cys-80. An N-linked (GlcNAc...) asparagine; by host glycan is attached at Asn-95. The chain crosses the membrane as a helical span at residues 101–121 (IPSPGIVLVLLVSIIMCCLLF). Over 122-140 (VYRFTRRTNKLPLQDMVVP) the chain is Cytoplasmic.

Belongs to the orthopoxvirus OPG019 family. In terms of assembly, variola growth factor interacts with host EGFR and promotes EGFR dimerization.

The protein resides in the host membrane. It localises to the secreted. Its function is as follows. Stimulates cellular proliferation (hyperplasia)and mobility around infected cells to promote rapid and efficient spread of infection. This effect is beneficial for virus replication in vivo, because poxviruses replicate possibly better in proliferating cells than in quiescent cells. Acts by binding host EGFR, inducing its dimerization, autophosphorylation and leading to activation of several cellular pathways regulating cell proliferation or cell survival. The activation by host EGFR of mitogen activated protein kinases (MAPK) and extracellular-signal regulated kinases (ERK) are essential for the positive effect of vaccinia growth factor on poxvirus virulence in vivo. This Variola virus protein is Pro-variola growth factor (OPG019).